The following is an 845-amino-acid chain: MPNDTNGDDYKKLEKASVNLNFLKSNSHTHIGPLSAIAELVDNAYDADARDLHIDFLDINNEQFLELRDDGLGMAREEALHAITFGHSAKCSYKIGRYGNGLKSGAFHLGRELLLVTKKDGIITALLISHRFHEDQGLTNSVFVPCPSFDLDGIPICQTESEKDRFNLEMKIIGKYAPLGSRTLAELADKITGSTGTIIIIGNLRRSVTGELAINTTKDPTDIIVDSGEENKPWRESLRKYLEFIYLKPRMRIHVRGEQVLPKRISENWIAKKQQLISGDQFTAAYNKILDEKNETVKKCEEEKALVMSEIGGTNYTSVRREDRANQKSLRLRVDTSQKNLDSAIADRDAFKKEGKSEKSFHLNMGIETKDRSNNGIHFYINNRLILWGNKEAKFFSKFANSIGISMFLSLDYSLFSAAQNKQGFDHVKDFQVLVRKCNDALRDYSMYLEKSWIPTHLKNTWNVRIYEGDDVWAVLWGVYGYNNTTSTTCVQTHDSARDQVMWTTCGIWKLCQMCRTWIKASRPNEIVGSNDDFFCCENVNHHGCRTIVAEDNDFSKLPEKYDHILPQKRLTNSAPSSSDSQNSIRSASSCSSSSRLLNVAKIESHERIHSSTGGHRLGESFSTTSVKMEPIPNNAHDSHIAEVQRRHSTGRAISPAVSEISRRAGTAPSSQLDMIMGEESDESQEALTIRAPRQRAKRPIERVSRRNRRDQSDDDSDSENEERYATAPKKSKVKGKAVVRAPKMTREKWLEEMLNQFLTAHGEQPLPKNGQRDFDPTNIVEQTSRRNFKNNQRIVDAQQAIMRQIGSVLDHLKRNPTHNFKIPASGTVEEKLKNIEHQIKGKKK.

Residues Asn-43, 88 to 90 (SAK), and 97 to 103 (RYGNGLK) each bind ATP. Asn-43 contributes to the Mg(2+) binding site. The stretch at 284–311 (AAYNKILDEKNETVKKCEEEKALVMSEI) forms a coiled coil. Residue Lys-422 coordinates ATP. Disordered regions lie at residues 566–590 (LPQKRLTNSAPSSSDSQNSIRSASS) and 628–739 (KMEP…GKAV). Residues 574–590 (SAPSSSDSQNSIRSASS) show a composition bias toward low complexity. A compositionally biased stretch (basic and acidic residues) spans 637–646 (HDSHIAEVQR).

As to quaternary structure, predominantly forms monomers and dimers, but multimerizes to form trimers and tetramers upon DNA binding. In terms of tissue distribution, expressed in germline and somatic cells.

The protein resides in the nucleus. Its subcellular location is the nuclear body. It carries out the reaction ATP + H2O = ADP + phosphate + H(+). Its function is as follows. Binds non-specifically to DNA and forms static foci which grow by recruiting other morc-1 molecules, and thereby stimulates conformational changes and compaction of DNA, which appears to be enhanced by ATP-binding, but does not require ATP activity. Preferentially binds to long DNAs. Compacts and entraps segments of DNA by sequentially forming loops along the DNA, beginning at the free ends of single- and double-tethered DNA. Does not extrude the DNA loops on compacted double-tethered DNA. Involved in gene silencing. Plays a role in germline RNA interference (RNAi), and in particular, the silencing of endogenous small interfering RNA (endo-siRNA) target genes. May play a role in heterochromatin localization and condensation, and the siRNAi-directed trimethylation of 'Lys-9' of histone H3 in hermaphrodite X chromosomes. Promotes transgenerational epigenetic inheritance and germline immortality. The sequence is that of ATPase morc-1 from Caenorhabditis elegans.